A 261-amino-acid chain; its full sequence is Ribosomal RNA small subunit methyltransferase A (261 aa).

The S-adenosyl-L-methionine site is built by Asn-11, Leu-13, Gly-38, Glu-59, Asp-84, and Ser-106.

It belongs to the class I-like SAM-binding methyltransferase superfamily. rRNA adenine N(6)-methyltransferase family. RsmA subfamily.

Its subcellular location is the cytoplasm. The enzyme catalyses adenosine(1518)/adenosine(1519) in 16S rRNA + 4 S-adenosyl-L-methionine = N(6)-dimethyladenosine(1518)/N(6)-dimethyladenosine(1519) in 16S rRNA + 4 S-adenosyl-L-homocysteine + 4 H(+). In terms of biological role, specifically dimethylates two adjacent adenosines (A1518 and A1519) in the loop of a conserved hairpin near the 3'-end of 16S rRNA in the 30S particle. May play a critical role in biogenesis of 30S subunits. This is Ribosomal RNA small subunit methyltransferase A from Wigglesworthia glossinidia brevipalpis.